The primary structure comprises 242 residues: tRNA (guanine-N(1)-)-methyltransferase (242 aa).

Residues G109 and 129–134 (LGDFVL) each bind S-adenosyl-L-methionine.

It belongs to the RNA methyltransferase TrmD family. As to quaternary structure, homodimer.

It localises to the cytoplasm. The catalysed reaction is guanosine(37) in tRNA + S-adenosyl-L-methionine = N(1)-methylguanosine(37) in tRNA + S-adenosyl-L-homocysteine + H(+). In terms of biological role, specifically methylates guanosine-37 in various tRNAs. The sequence is that of tRNA (guanine-N(1)-)-methyltransferase from Exiguobacterium sibiricum (strain DSM 17290 / CCUG 55495 / CIP 109462 / JCM 13490 / 255-15).